The primary structure comprises 330 residues: Peptide transport system ATP-binding protein SapD (330 aa).

The region spanning 6–259 is the ABC transporter domain; sequence IRNLTIEFKT…PHHPYTQALI (254 aa). 40-47 is an ATP binding site; it reads GESGSGKS.

This sequence belongs to the ABC transporter superfamily.

The protein localises to the cell inner membrane. In terms of biological role, involved in a peptide intake transport system that plays a role in the resistance to antimicrobial peptides. The protein is Peptide transport system ATP-binding protein SapD of Salmonella typhimurium (strain LT2 / SGSC1412 / ATCC 700720).